The primary structure comprises 197 residues: dITP/XTP pyrophosphatase (197 aa).

8–13 lines the substrate pocket; the sequence is TGNQGK. Asp69 acts as the Proton acceptor in catalysis. Asp69 lines the Mg(2+) pocket. Residues Ser70, 154–157, Lys177, and 182–183 each bind substrate; these read FGYD and HR.

Belongs to the HAM1 NTPase family. In terms of assembly, homodimer. It depends on Mg(2+) as a cofactor.

It catalyses the reaction XTP + H2O = XMP + diphosphate + H(+). The catalysed reaction is dITP + H2O = dIMP + diphosphate + H(+). The enzyme catalyses ITP + H2O = IMP + diphosphate + H(+). In terms of biological role, pyrophosphatase that catalyzes the hydrolysis of nucleoside triphosphates to their monophosphate derivatives, with a high preference for the non-canonical purine nucleotides XTP (xanthosine triphosphate), dITP (deoxyinosine triphosphate) and ITP. Seems to function as a house-cleaning enzyme that removes non-canonical purine nucleotides from the nucleotide pool, thus preventing their incorporation into DNA/RNA and avoiding chromosomal lesions. The protein is dITP/XTP pyrophosphatase of Photobacterium profundum (strain SS9).